We begin with the raw amino-acid sequence, 1054 residues long: DIS3-like exonuclease 1 (1054 aa).

The region spanning 236-313 (AGIKSGRYIQ…WKGRTAALCE (78 aa)) is the CSD1 domain. The disordered stretch occupies residues 313–332 (ENDSEDKASGESPSEPMPTG). Residues 365 to 431 (ILVTPWDYRI…GEIATILVEN (67 aa)) enclose the CSD2 domain. The RNB domain occupies 465 to 816 (RRDLRSTHLV…VHRLLMAAIS (352 aa)). Phosphoserine is present on Ser989.

This sequence belongs to the RNR ribonuclease family. In terms of assembly, component of the RNA exosome complex. The catalytically inactive RNA exosome core (Exo-9) complex is believed to associate with catalytic subunits EXOSC10, and DIS3 or DIS3L in cytoplasmic- and nuclear-specific RNA exosome complex forms. Mg(2+) serves as cofactor.

Its subcellular location is the cytoplasm. It catalyses the reaction Exonucleolytic cleavage in the 3'- to 5'-direction to yield nucleoside 5'-phosphates.. Functionally, catalytic component of the RNA exosome complex which has 3'-&gt;5' exoribonuclease activity and participates in a multitude of cellular RNA processing and degradation events. In the cytoplasm, the RNA exosome complex is involved in general mRNA turnover and specifically degrades inherently unstable mRNAs containing AU-rich elements (AREs) within their 3' untranslated regions, and in RNA surveillance pathways, preventing translation of aberrant mRNAs. It seems to be involved in degradation of histone mRNA. This chain is DIS3-like exonuclease 1 (Dis3l), found in Rattus norvegicus (Rat).